Reading from the N-terminus, the 177-residue chain is Large ribosomal subunit protein uL6 (177 aa).

Over residues 152–171 (RPPEPYKGKGVRYDDEEVRR) the composition is skewed to basic and acidic residues. Residues 152-177 (RPPEPYKGKGVRYDDEEVRRKEAKKK) form a disordered region.

This sequence belongs to the universal ribosomal protein uL6 family. As to quaternary structure, part of the 50S ribosomal subunit.

Its function is as follows. This protein binds to the 23S rRNA, and is important in its secondary structure. It is located near the subunit interface in the base of the L7/L12 stalk, and near the tRNA binding site of the peptidyltransferase center. In Shewanella sp. (strain ANA-3), this protein is Large ribosomal subunit protein uL6.